Here is a 148-residue protein sequence, read N- to C-terminus: Large ribosomal subunit protein uL16 (148 aa).

It belongs to the universal ribosomal protein uL16 family. As to quaternary structure, part of the 50S ribosomal subunit.

Functionally, binds 23S rRNA and is also seen to make contacts with the A and possibly P site tRNAs. The sequence is that of Large ribosomal subunit protein uL16 from Gloeobacter violaceus (strain ATCC 29082 / PCC 7421).